Here is a 463-residue protein sequence, read N- to C-terminus: Thiamine-repressible acid phosphatase pho4 (463 aa).

Positions 1–18 (MKLSGISLWLLAASIVHA) are cleaved as a signal peptide. Residue H69 is the Nucleophile of the active site. Residues N98, N104, N186, N221, N251, and N328 are each glycosylated (N-linked (GlcNAc...) asparagine). D341 serves as the catalytic Proton donor. N-linked (GlcNAc...) asparagine glycosylation is found at N433, N439, and N458.

This sequence belongs to the histidine acid phosphatase family.

The protein localises to the secreted. The protein resides in the cell wall. It carries out the reaction a phosphate monoester + H2O = an alcohol + phosphate. Its function is as follows. May dephosphorylate thiamine phosphates. The polypeptide is Thiamine-repressible acid phosphatase pho4 (pho4) (Schizosaccharomyces pombe (strain 972 / ATCC 24843) (Fission yeast)).